Reading from the N-terminus, the 263-residue chain is Putative replication protein PDa0002 (263 aa).

The protein is Putative replication protein PDa0002 of Xylella fastidiosa (strain Temecula1 / ATCC 700964).